We begin with the raw amino-acid sequence, 120 residues long: NAD(P)H-quinone oxidoreductase subunit 3, chloroplastic (120 aa).

Transmembrane regions (helical) follow at residues Ile9–Gly29, Met64–Val84, and Val88–Ser108.

Belongs to the complex I subunit 3 family. In terms of assembly, NDH is composed of at least 16 different subunits, 5 of which are encoded in the nucleus.

Its subcellular location is the plastid. The protein localises to the chloroplast thylakoid membrane. It carries out the reaction a plastoquinone + NADH + (n+1) H(+)(in) = a plastoquinol + NAD(+) + n H(+)(out). The catalysed reaction is a plastoquinone + NADPH + (n+1) H(+)(in) = a plastoquinol + NADP(+) + n H(+)(out). In terms of biological role, NDH shuttles electrons from NAD(P)H:plastoquinone, via FMN and iron-sulfur (Fe-S) centers, to quinones in the photosynthetic chain and possibly in a chloroplast respiratory chain. The immediate electron acceptor for the enzyme in this species is believed to be plastoquinone. Couples the redox reaction to proton translocation, and thus conserves the redox energy in a proton gradient. This Nuphar advena (Common spatterdock) protein is NAD(P)H-quinone oxidoreductase subunit 3, chloroplastic.